The primary structure comprises 132 residues: MPTYSSMLHAKMIKSPAALNTPQPSPKQAVSNAHRLDGGSSYVVSLSEISSCPTSTTNSLFAAATPSTLLLSALYCTPPSQLRMKSSCTLTLFIPPLNTAASPTLPDTSCHGEWNTTTRPCLAASTALMYSL.

This is an uncharacterized protein from Botryotinia fuckeliana (Noble rot fungus).